The following is a 310-amino-acid chain: MKISVIGAGNVGATAAHRLAEKQLAHEVVLIDIVEGIPQGKALDMYESGPVGLFDTAIHGSNDYMASADSDIVLITAGLARKPGMTREDLLMKNAGIVKEVTDQVMKHSSNPILVMVSNPLDVMTFVAHASSGLGKERVIGMAGVLDAARFRSFIAEELNVSMQDVNAFVLGGHGDSMVPVVKYTSVAGIPITELLSQEKIDALVERTRNGGVEIVNYLKNGSAFYAPAASAVEMIEAIVKDRKRILACTTLLEGEYGINNVFCGVPVKIGKNGVEEILEINLAPAELDALKHSASLVQENCKSLEALLA.

Residues 7–12 (GAGNVG) and Asp32 contribute to the NAD(+) site. Substrate is bound by residues Arg81 and Arg87. Residues Asn94 and 117-119 (VSN) each bind NAD(+). The substrate site is built by Asn119 and Arg150. His174 acts as the Proton acceptor in catalysis.

Belongs to the LDH/MDH superfamily. MDH type 3 family.

It carries out the reaction (S)-malate + NAD(+) = oxaloacetate + NADH + H(+). Catalyzes the reversible oxidation of malate to oxaloacetate. In Chlorobium phaeobacteroides (strain DSM 266 / SMG 266 / 2430), this protein is Malate dehydrogenase.